Consider the following 57-residue polypeptide: MAVQQRRVSKSRKGMRRSHDHLTVSNTVACNECGKALLPHRACRDCKTYRSIKLSIK.

Positions 1-20 are disordered; that stretch reads MAVQQRRVSKSRKGMRRSHD. Positions 7 to 19 are enriched in basic residues; that stretch reads RVSKSRKGMRRSH.

This sequence belongs to the bacterial ribosomal protein bL32 family.

The polypeptide is Large ribosomal subunit protein bL32 (Ureaplasma urealyticum serovar 10 (strain ATCC 33699 / Western)).